Consider the following 345-residue polypeptide: tRNA pseudouridine synthase B (345 aa).

Aspartate 39 serves as the catalytic Nucleophile.

The protein belongs to the pseudouridine synthase TruB family. Type 1 subfamily.

The catalysed reaction is uridine(55) in tRNA = pseudouridine(55) in tRNA. Responsible for synthesis of pseudouridine from uracil-55 in the psi GC loop of transfer RNAs. This chain is tRNA pseudouridine synthase B, found in Rickettsia africae (strain ESF-5).